The sequence spans 711 residues: Polyribonucleotide nucleotidyltransferase (711 aa).

2 residues coordinate Mg(2+): Asp-494 and Asp-500. The KH domain maps to 560–620 (PKIEIFGVDP…INVENAKSDI (61 aa)). An S1 motif domain is found at 651–710 (GEEFDGVVKKIMDFGAFISLKDGIDGLLHVSKIKTQLSEGDTLRVKVEEIKRGKISLELC).

The protein belongs to the polyribonucleotide nucleotidyltransferase family. Mg(2+) is required as a cofactor.

The protein localises to the cytoplasm. It catalyses the reaction RNA(n+1) + phosphate = RNA(n) + a ribonucleoside 5'-diphosphate. Its function is as follows. Involved in mRNA degradation. Catalyzes the phosphorolysis of single-stranded polyribonucleotides processively in the 3'- to 5'-direction. This is Polyribonucleotide nucleotidyltransferase from Campylobacter hominis (strain ATCC BAA-381 / DSM 21671 / CCUG 45161 / LMG 19568 / NCTC 13146 / CH001A).